Reading from the N-terminus, the 555-residue chain is Glutamine--tRNA ligase (555 aa).

A 'HIGH' region motif is present at residues 34 to 44 (PEPNGYLHIGH). ATP contacts are provided by residues 35-37 (EPN) and 41-47 (HIGHAKS). 2 residues coordinate L-glutamine: Asp67 and Tyr212. ATP is bound by residues Thr231, 261–262 (RL), and 269–271 (MSK). The 'KMSKS' region signature appears at 268–272 (VMSKR). The tract at residues 317 to 324 (TKQDNTIE) is interaction with tRNA.

It belongs to the class-I aminoacyl-tRNA synthetase family. As to quaternary structure, monomer.

Its subcellular location is the cytoplasm. It carries out the reaction tRNA(Gln) + L-glutamine + ATP = L-glutaminyl-tRNA(Gln) + AMP + diphosphate. In Enterobacter sp. (strain 638), this protein is Glutamine--tRNA ligase.